Consider the following 608-residue polypeptide: Sensor protein kinase WalK (608 aa).

A run of 2 helical transmembrane segments spans residues 14–34 and 183–203; these read LVIV…LYFT and IFIV…FFIA. The HAMP domain maps to 204–256; sequence RTITKPITDMRNQTVEMSRGNYTQRVKIYGNDEIGELALAFNNLSKRVQEAQA. One can recognise a PAS domain in the interval 261-331; sequence EKRRLDSVIT…EIQENNDSFL (71 aa). Positions 271, 274, 364, and 368 each coordinate Zn(2+). Residues 314–378 form the PAC domain; it reads LEDEFKLEEI…QQQVERERRE (65 aa). A Histidine kinase domain is found at 382–600; it reads NVSHELRTPL…SIFITLPCEV (219 aa). Residue H385 is modified to Phosphohistidine; by autocatalysis.

Forms homodimers. Forms homooligomers. Post-translationally, autophosphorylated.

The protein resides in the cell membrane. It catalyses the reaction ATP + protein L-histidine = ADP + protein N-phospho-L-histidine.. With respect to regulation, by zinc. Zinc-binding negatively regulates WalK kinase activity and thus autophosphorylation. Its function is as follows. Member of the two-component regulatory system WalK/WalR that regulates genes involved in cell wall metabolism, virulence regulation, biofilm production, oxidative stress resistance and antibiotic resistance via direct or indirect regulation of autolysins. Functions as a sensor protein kinase which is autophosphorylated at a histidine residue in the dimerization domain and transfers its phosphate group to the conserved aspartic acid residue in the regulatory domain of WalR. In turn, WalR binds to the upstream promoter regions of the target genes to positively and negatively regulate their expression. This is Sensor protein kinase WalK (walK) from Staphylococcus aureus (strain MRSA252).